The primary structure comprises 254 residues: 5'-nucleotidase SurE (254 aa).

A divalent metal cation-binding residues include Asp8, Asp9, Ser38, and Asn91.

The protein belongs to the SurE nucleotidase family. Requires a divalent metal cation as cofactor.

The protein localises to the cytoplasm. It catalyses the reaction a ribonucleoside 5'-phosphate + H2O = a ribonucleoside + phosphate. Its function is as follows. Nucleotidase that shows phosphatase activity on nucleoside 5'-monophosphates. The sequence is that of 5'-nucleotidase SurE from Anaeromyxobacter sp. (strain Fw109-5).